We begin with the raw amino-acid sequence, 173 residues long: Alpha-crystallin A chain (173 aa).

An N-acetylmethionine modification is found at Met1. Positions 1 to 63 (MDIAIQHPWF…RSVLDSGISE (63 aa)) are required for complex formation with BFSP1 and BFSP2. Gln6 is subject to Deamidated glutamine; partial. Residue Ser45 is modified to Phosphoserine. At Gln50 the chain carries Deamidated glutamine; partial. In terms of domain architecture, sHSP spans 52-162 (LFRSVLDSGI…GHSERAIPVS (111 aa)). Lys70 is modified (N6-acetyllysine). Gln90 is subject to Deamidated glutamine; partial. Lys99 carries the N6-acetyllysine modification. His100 serves as a coordination point for Zn(2+). Asn101 is subject to Deamidated asparagine; partial. The Zn(2+) site is built by Glu102 and His107. The residue at position 122 (Ser122) is a Phosphoserine. A Deamidated asparagine; partial modification is found at Asn123. The disordered stretch occupies residues 144 to 173 (PKVTSGMDAGHSERAIPVSREEKPSSAPSS). Positions 153 to 167 (GHSERAIPVSREEKP) are enriched in basic and acidic residues. Position 154 (His154) interacts with Zn(2+). The O-linked (GlcNAc) serine glycan is linked to Ser162.

Belongs to the small heat shock protein (HSP20) family. In terms of assembly, heteromer composed of three CRYAA and one CRYAB subunits. Inter-subunit bridging via zinc ions enhances stability, which is crucial as there is no protein turn over in the lens. Can also form homodimers and homotetramers (dimers of dimers) which serve as the building blocks of homooligomers. Within homooligomers, the zinc-binding motif is created from residues of 3 different molecules. His-100 and Glu-102 from one molecule are ligands of the zinc ion, and His-107 and His-154 residues from additional molecules complete the site with tetrahedral coordination geometry. Part of a complex required for lens intermediate filament formation composed of BFSP1, BFSP2 and CRYAA. Acetylation at Lys-70 may increase chaperone activity. Post-translationally, undergoes age-dependent proteolytical cleavage at the C-terminus.

Its subcellular location is the cytoplasm. It localises to the nucleus. Contributes to the transparency and refractive index of the lens. Acts as a chaperone, preventing aggregation of various proteins under a wide range of stress conditions. Required for the correct formation of lens intermediate filaments as part of a complex composed of BFSP1, BFSP2 and CRYAA. The sequence is that of Alpha-crystallin A chain (CRYAA) from Phocoena phocoena (Harbor porpoise).